The following is a 643-amino-acid chain: Sodium/iodide cotransporter (643 aa).

Topologically, residues 1–14 are extracellular; it reads MEAVETGERPTFGA. Residues 15–31 traverse the membrane as a helical segment; sequence WDYGVFALMLLVSTGIG. Topologically, residues 32-56 are cytoplasmic; the sequence is LWVGLARGGQRSAEDFFTGGRRLAA. The discontinuously helical transmembrane segment at 57–80 threads the bilayer; it reads LPVGLSLSASFMSAVQVLGVPSEA. 3 residues coordinate Na(+): Ser-69, Val-71, and Gln-72. Val-76 contacts iodide. The Extracellular portion of the chain corresponds to 81-84; that stretch reads YRYG. Residues 85–105 traverse the membrane as a helical segment; it reads LKFLWMCLGQLLNSVLTALLF. Met-90 lines the iodide pocket. The Cytoplasmic segment spans residues 106–130; sequence MPVFYRLGLTSTYEYLEMRFSRAVR. A helical transmembrane segment spans residues 131–157; the sequence is LCGTLQYIVATMLYTGIVIYAPALILN. Tyr-144 is a Na(+) binding site. Residues 158 to 163 lie on the Extracellular side of the membrane; it reads QVTGLD. Residues 164-181 traverse the membrane as a helical segment; it reads IWASLLSTGIICTFYTAV. Topologically, residues 182-189 are cytoplasmic; it reads GGMKAVVW. The chain crosses the membrane as a helical span at residues 190–208; it reads TDVFQVVVMLSGFWVVLAR. Residues 209 to 243 are Extracellular-facing; sequence GVMLVGGPRQVLTLAQNHSRINLMDFNPDPRSRYT. A discontinuously helical membrane pass occupies residues 244-266; sequence FWTFVVGGTLVWLSMYGVNQAQV. Trp-255 lines the iodide pocket. Met-258 contacts Na(+). The Cytoplasmic segment spans residues 267-278; the sequence is QRYVACRTEKQA. Residues 279-301 form a helical membrane-spanning segment; it reads KLALLINQVGLFLIVSSAACCGI. Residues 302 to 335 lie on the Extracellular side of the membrane; the sequence is VMFVFYTDCDPLLLGRISAPDQYMPLLVLDIFED. The helical transmembrane segment at 336–363 threads the bilayer; sequence LPGVPGLFLACAYSGTLSTASTSINAMA. The Cytoplasmic portion of the chain corresponds to 364–386; the sequence is AVTVEDLIKPRLRSLAPRKLVII. Residues 387–408 form a helical membrane-spanning segment; that stretch reads SKGLSLIYGSACLTVAALSSLL. Topologically, residues 409-411 are extracellular; sequence GGG. The chain crosses the membrane as a helical span at residues 412-437; that stretch reads VLQGSFTVMGVISGPLLGAFILGMFL. Residue Leu-413 participates in iodide binding. Na(+) is bound by residues Ser-416 and Phe-417. Residue Phe-417 coordinates iodide. Topologically, residues 438–441 are cytoplasmic; sequence PACN. A helical transmembrane segment spans residues 442–465; that stretch reads TPGVLAGLGAGLALSLWVALGATL. Residues 466 to 525 are Extracellular-facing; that stretch reads YPPSEQTMRVLPSSAARCVALSVNASGLLDPALLPANDSSRAPSSGMDASRPALADSFYA. N-linked (GlcNAc...) asparagine glycans are attached at residues Asn-489 and Asn-502. Residues 526–550 traverse the membrane as a helical segment; sequence ISYLYYGALGTLTTVLCGALISCLT. The Cytoplasmic portion of the chain corresponds to 551-643; sequence GPTKRSTLAP…GGRDQQETNL (93 aa). Residue Ser-556 is modified to Phosphoserine; by PKA. The interval 623 to 643 is disordered; it reads AGSWTPCVGHDGGRDQQETNL. Residues 633-643 are compositionally biased toward basic and acidic residues; the sequence is DGGRDQQETNL.

It belongs to the sodium:solute symporter (SSF) (TC 2.A.21) family. In terms of assembly, monomer. Glycosylated. In terms of tissue distribution, expression is primarily in thyroid tissue, but also to a lower extent in mammary gland and ovary. Expression is reduced in tumors.

It localises to the cell membrane. The protein localises to the cytoplasm. The catalysed reaction is iodide(out) + 2 Na(+)(out) = iodide(in) + 2 Na(+)(in). The enzyme catalyses chlorate(out) + 2 Na(+)(out) = chlorate(in) + 2 Na(+)(in). It catalyses the reaction thiocyanate(out) + 2 Na(+)(out) = thiocyanate(in) + 2 Na(+)(in). It carries out the reaction nitrate(out) + 2 Na(+)(out) = nitrate(in) + 2 Na(+)(in). The catalysed reaction is selenocyanate(out) + 2 Na(+)(out) = selenocyanate(in) + 2 Na(+)(in). Its activity is regulated as follows. Dysidenin and perchlorate inhibit iodide transport activity. Oxyanions inhibit iodide transport activity by blocking the binding sites for iodide and one of the sodium ions. Its function is as follows. Sodium:iodide symporter that mediates the transport of iodide into the thyroid gland. Can also mediate the transport of chlorate, thiocynate, nitrate and selenocynate. This Homo sapiens (Human) protein is Sodium/iodide cotransporter (SLC5A5).